The primary structure comprises 885 residues: MRPRGTPPSFLPLPVLLALAVIAAAGRAAPAAAAAPTADPAATPALPEDEEVPDEDGEGVATPAPAANASVEAGRATLREDLREIKARDGDATFYVCPPPTGATVVQFEQPRPCPRAPDGQNYTEGIAVVFKENIAPYKFKATMYYKDVTVSQVWFGHRYSQFMGIFEDRAPVPFEEVMDKINAKGVCRSTAKYVRNNMESTAFHRDDHESDMALKPAKAATRTSRGWHTTDLKYNPARVEAFHRYGTTVNCIVEEVEARSVYPYDEFVLATGDFVYMSPFYGYRDGSHGEHTAYAADRFRQVDGYYERDLSTGRRAAAPVTRNLLTTPKFTVGWDWAPKRPSVCTLTKWREVDEMLRAEYGPSFRFSSAALSTTFTANRTEYALSRVDLADCVGREAREAVDRIFLRRYNGTHVKVGQVQYYLATGGFLIAYQPLLSNALVELYVRELVREQTRRPAGGDPGEAATPGPSVDPPSVERIKTTSSVEFARLQFTYDHIQRHVNDMLGRIATAWCELQNRELTLWNEARRLNPGAIASATVGRRVSARMLGDVMAVSTCVPVAPDNVIMQNSIGVAARPGTCYSRPLVSFRYEADGPLVEGQLGEDNEIRLERDALEPCTVGHRRYFTFGAGYVYFEEYAYSHQLGRADVTTVSTFINLNLTMLEDHEFVPLEVYTRQEIKDSGLLDYTEVQRRNQLHALRFADIDTVIKADAHAALFAGLYSFFEGLGDVGRAVGKVVMGIVGGVVSAVSGVSSFLSNPFGALAVGLLVLAGLAAAFFAFRYVMRLQRNPMKALYPLTTKELKSDGAPLAGGGEDGAEDFDEAKLAQAREMIRYMALVSAMERTEHKARKKGTSALLSAKVTDAVMRKRARPRYSPLRDTDEEEL.

An N-terminal signal peptide occupies residues 1-34 (MRPRGTPPSFLPLPVLLALAVIAAAGRAAPAAAA). Over residues 29 to 46 (APAAAAAPTADPAATPAL) the composition is skewed to low complexity. The interval 29–74 (APAAAAAPTADPAATPALPEDEEVPDEDGEGVATPAPAANASVEAG) is disordered. Residues 35-759 (APTADPAATP…SGVSSFLSNP (725 aa)) lie on the Virion surface side of the membrane. Positions 47–58 (PEDEEVPDEDGE) are enriched in acidic residues. N-linked (GlcNAc...) asparagine; by host glycosylation is found at Asn68 and Asn122. Disulfide bonds link Cys97–Cys558, Cys114–Cys514, Cys188–Cys252, Cys345–Cys393, and Cys581–Cys618. Involved in fusion and/or binding to host membrane regions lie at residues 154–160 (VWFGHRY) and 239–246 (RVEAFHRY). Residues Asn379 and Asn411 are each glycosylated (N-linked (GlcNAc...) asparagine; by host). The interval 455–478 (RRPAGGDPGEAATPGPSVDPPSVE) is disordered. Asn659 is a glycosylation site (N-linked (GlcNAc...) asparagine; by host). Hydrophobic membrane proximal region regions lie at residues 704 to 757 (IDTV…SFLS) and 716 to 756 (LFAG…SSFL). A helical membrane pass occupies residues 760-780 (FGALAVGLLVLAGLAAAFFAF). Over 781–885 (RYVMRLQRNP…PLRDTDEEEL (105 aa)) the chain is Intravirion. A Golgi targeting motif is present at residues 834-837 (YMAL). The interval 866-885 (MRKRARPRYSPLRDTDEEEL) is disordered. The Internalization motif signature appears at 874 to 877 (YSPL).

Belongs to the herpesviridae glycoprotein B family. Homotrimer; disulfide-linked. Binds to heparan sulfate proteoglycans. Interacts with gH/gL heterodimer.

The protein localises to the virion membrane. It is found in the host cell membrane. It localises to the host endosome membrane. The protein resides in the host Golgi apparatus membrane. Envelope glycoprotein that forms spikes at the surface of virion envelope. Essential for the initial attachment to heparan sulfate moieties of the host cell surface proteoglycans. Involved in fusion of viral and cellular membranes leading to virus entry into the host cell. Following initial binding to its host receptors, membrane fusion is mediated by the fusion machinery composed at least of gB and the heterodimer gH/gL. May be involved in the fusion between the virion envelope and the outer nuclear membrane during virion egress. The chain is Envelope glycoprotein B from Herpes simplex virus type 2 (strain SA8) (Simian agent 8).